Here is a 95-residue protein sequence, read N- to C-terminus: MLYTLSRSPYACDLAALLRIAQHGDDLLLLSDGVIAGLTGSPAACALGASPLTLHALENDIVARGLSAHLSPNIAIISYTDFVRLTEKQPQQMAW.

Belongs to the DsrH/TusB family. In terms of assembly, heterohexamer, formed by a dimer of trimers. The hexameric TusBCD complex contains 2 copies each of TusB, TusC and TusD. The TusBCD complex interacts with TusE.

It is found in the cytoplasm. Functionally, part of a sulfur-relay system required for 2-thiolation of 5-methylaminomethyl-2-thiouridine (mnm(5)s(2)U) at tRNA wobble positions. In Sodalis glossinidius (strain morsitans), this protein is Protein TusB.